A 277-amino-acid chain; its full sequence is Bifunctional protein FolD (277 aa).

NADP(+) contacts are provided by residues 164-166 (GRS), serine 189, and threonine 230.

The protein belongs to the tetrahydrofolate dehydrogenase/cyclohydrolase family. Homodimer.

The enzyme catalyses (6R)-5,10-methylene-5,6,7,8-tetrahydrofolate + NADP(+) = (6R)-5,10-methenyltetrahydrofolate + NADPH. It catalyses the reaction (6R)-5,10-methenyltetrahydrofolate + H2O = (6R)-10-formyltetrahydrofolate + H(+). The protein operates within one-carbon metabolism; tetrahydrofolate interconversion. In terms of biological role, catalyzes the oxidation of 5,10-methylenetetrahydrofolate to 5,10-methenyltetrahydrofolate and then the hydrolysis of 5,10-methenyltetrahydrofolate to 10-formyltetrahydrofolate. This is Bifunctional protein FolD from Clostridium perfringens (strain 13 / Type A).